A 188-amino-acid polypeptide reads, in one-letter code: Chitin synthase 1 (188 aa).

This sequence belongs to the chitin synthase family. Class I subfamily.

It localises to the cell membrane. It carries out the reaction [(1-&gt;4)-N-acetyl-beta-D-glucosaminyl](n) + UDP-N-acetyl-alpha-D-glucosamine = [(1-&gt;4)-N-acetyl-beta-D-glucosaminyl](n+1) + UDP + H(+). In terms of biological role, polymerizes chitin, a structural polymer of the cell wall and septum, by transferring the sugar moiety of UDP-GlcNAc to the non-reducing end of the growing chitin polymer. The sequence is that of Chitin synthase 1 (CHS1) from Ajellomyces dermatitidis (Blastomyces dermatitidis).